The sequence spans 533 residues: (E)-beta-farnesene synthase (533 aa).

D286, D290, N430, S434, and E438 together coordinate Mg(2+). Residues 286–290 carry the DDXXD motif motif; it reads DDMMD.

Belongs to the terpene synthase family. Requires Mg(2+) as cofactor. The cofactor is Co(2+). Mn(2+) serves as cofactor.

It is found in the cytoplasm. It carries out the reaction (2E,6E)-farnesyl diphosphate = (E)-beta-farnesene + diphosphate. It participates in secondary metabolite biosynthesis; terpenoid biosynthesis. In terms of biological role, sesquiterpene cyclase catalyzing the production of sixfold more beta-farnesene than alpha-bergamotene from farnesyl diphosphate. Involved in indirect defense by producing volatile signals attracting natural enemies of herbivores. This chain is (E)-beta-farnesene synthase, found in Zea perennis (Perennial teosinte).